Consider the following 322-residue polypeptide: Adenine deaminase (322 aa).

Positions 11, 13, and 189 each coordinate Zn(2+). E192 (proton donor) is an active-site residue. D270 contributes to the Zn(2+) binding site. D271 contributes to the substrate binding site.

The protein belongs to the metallo-dependent hydrolases superfamily. Adenosine and AMP deaminases family. Adenine deaminase type 2 subfamily. Requires Zn(2+) as cofactor.

It catalyses the reaction adenine + H2O + H(+) = hypoxanthine + NH4(+). Functionally, catalyzes the hydrolytic deamination of adenine to hypoxanthine. Plays an important role in the purine salvage pathway and in nitrogen catabolism. This chain is Adenine deaminase, found in Rhizobium etli (strain ATCC 51251 / DSM 11541 / JCM 21823 / NBRC 15573 / CFN 42).